A 232-amino-acid chain; its full sequence is Ion-translocating oxidoreductase complex subunit E (232 aa).

6 helical membrane-spanning segments follow: residues 12-31, 39-59, 69-89, 92-112, 125-145, and 182-202; these read LWRN…LLAV, LGLG…VSAL, IPIY…LINA, FGLY…CIVI, ALAA…LLLL, and PFLL…MLVG.

The protein belongs to the NqrDE/RnfAE family. As to quaternary structure, the complex is composed of six subunits: RnfA, RnfB, RnfC, RnfD, RnfE and RnfG.

The protein localises to the cell inner membrane. Functionally, part of a membrane-bound complex that couples electron transfer with translocation of ions across the membrane. The polypeptide is Ion-translocating oxidoreductase complex subunit E (Sodalis glossinidius (strain morsitans)).